The following is a 612-amino-acid chain: MAFNNFTRLDAHSAAEKAVSVIGLGYDLCSDVRFSACKTTPDGSRLVEIDPTRNRDLIFPGGIVVNNVSSSIKCDKGERTRLRSDILSFNQMSEKFNQDMCLSGKIPSGMFNNMFAFSKCWPKDASSVKTLAYDGWFISLYSVEIVRKQLTLRDEVKREVPSSWDSAALAGFIEKYGTHVVVGVTMGGKDVIHVKQMRKSNHEPEEIQKMLKHWGDERFCVDPVESKSPASVYSGKPKEENLLQWGLQPFGTSVSSAVVMHTKNEEIMRVCIRRGGVDLGQSHERWLSTVSQAPNVISMCFVPITSLLSGLPGTGFLSHAVNLYLRYKPPIEELHQFLEFQLPRQWAPVYGDLPLGLRRSKQSSPSLQFSLMGPKLYVNTSKVDSGERPVTGLRFFLEGKKGNHLAIHLQHLSACPPSLHLSHDDTYEPIEEPVEKGYYVPVKWGIFSHVCTYPVQYNGARSDDTASIVTKAWLEVKGMGMRKVLFLRLGFSLDASAVTRKSCWDNLSTNSRKSGVFSMISTRLSTGLSPNPATTKPQSKIDINSAVYPRGPSPPVKPKLLSLVDTKEVMRGPEEQPGYWVVTGAKLCVEAGKISIKAKYSLLTVISEDSLV.

Residues 5–338 (NFTRLDAHSA…PPIEELHQFL (334 aa)) enclose the MACPF domain.

This sequence belongs to the complement C6/C7/C8/C9 (TC 1.C.39) family.

Functionally, negatively controls the salicylic acid (SA)-mediated pathway of programmed cell death in plant immunity. The chain is MACPF domain-containing protein NSL1 (NSL1) from Arabidopsis thaliana (Mouse-ear cress).